Reading from the N-terminus, the 331-residue chain is tRNA pseudouridine synthase B (331 aa).

Catalysis depends on aspartate 51, which acts as the Nucleophile.

It belongs to the pseudouridine synthase TruB family. Type 1 subfamily.

The enzyme catalyses uridine(55) in tRNA = pseudouridine(55) in tRNA. Functionally, responsible for synthesis of pseudouridine from uracil-55 in the psi GC loop of transfer RNAs. The protein is tRNA pseudouridine synthase B of Verminephrobacter eiseniae (strain EF01-2).